A 325-amino-acid chain; its full sequence is Holliday junction branch migration complex subunit RuvB (325 aa).

Positions 1-180 are large ATPase domain (RuvB-L); the sequence is MKNQLLDAKV…FGIHLKLNFY (180 aa). ATP-binding positions include Leu-19, Arg-20, Gly-61, Lys-64, Thr-65, Ser-66, 127-129, Arg-170, Tyr-180, and Arg-217; that span reads EDF. Thr-65 lines the Mg(2+) pocket. A small ATPAse domain (RuvB-S) region spans residues 181-251; it reads SCEELTQIVE…ITDYALNQLG (71 aa). Residues 254–325 are head domain (RuvB-H); it reads KLGLDSSDHK…ITANALKHLH (72 aa). Residues Arg-290, Arg-309, and Arg-314 each coordinate DNA.

Belongs to the RuvB family. As to quaternary structure, homohexamer. Forms an RuvA(8)-RuvB(12)-Holliday junction (HJ) complex. HJ DNA is sandwiched between 2 RuvA tetramers; dsDNA enters through RuvA and exits via RuvB. An RuvB hexamer assembles on each DNA strand where it exits the tetramer. Each RuvB hexamer is contacted by two RuvA subunits (via domain III) on 2 adjacent RuvB subunits; this complex drives branch migration. In the full resolvosome a probable DNA-RuvA(4)-RuvB(12)-RuvC(2) complex forms which resolves the HJ.

It localises to the cytoplasm. The catalysed reaction is ATP + H2O = ADP + phosphate + H(+). In terms of biological role, the RuvA-RuvB-RuvC complex processes Holliday junction (HJ) DNA during genetic recombination and DNA repair, while the RuvA-RuvB complex plays an important role in the rescue of blocked DNA replication forks via replication fork reversal (RFR). RuvA specifically binds to HJ cruciform DNA, conferring on it an open structure. The RuvB hexamer acts as an ATP-dependent pump, pulling dsDNA into and through the RuvAB complex. RuvB forms 2 homohexamers on either side of HJ DNA bound by 1 or 2 RuvA tetramers; 4 subunits per hexamer contact DNA at a time. Coordinated motions by a converter formed by DNA-disengaged RuvB subunits stimulates ATP hydrolysis and nucleotide exchange. Immobilization of the converter enables RuvB to convert the ATP-contained energy into a lever motion, pulling 2 nucleotides of DNA out of the RuvA tetramer per ATP hydrolyzed, thus driving DNA branch migration. The RuvB motors rotate together with the DNA substrate, which together with the progressing nucleotide cycle form the mechanistic basis for DNA recombination by continuous HJ branch migration. Branch migration allows RuvC to scan DNA until it finds its consensus sequence, where it cleaves and resolves cruciform DNA. The chain is Holliday junction branch migration complex subunit RuvB from Orientia tsutsugamushi (strain Boryong) (Rickettsia tsutsugamushi).